Reading from the N-terminus, the 228-residue chain is Carbonic anhydrase (228 aa).

Zn(2+) contacts are provided by Cys-56, Asp-58, His-112, and Cys-115.

It belongs to the beta-class carbonic anhydrase family. Zn(2+) is required as a cofactor.

It catalyses the reaction hydrogencarbonate + H(+) = CO2 + H2O. Functionally, catalyzes the reversible hydration of CO(2) to H(2)CO(3). The main role may be to provide inorganic carbon for the bicarbonate-dependent carboxylation reactions catalyzed by pyruvate carboxylase, acetyl-CoA carboxylase and carbamoyl-phosphate synthetase. Involved in osmoadaptation. In Emericella nidulans (strain FGSC A4 / ATCC 38163 / CBS 112.46 / NRRL 194 / M139) (Aspergillus nidulans), this protein is Carbonic anhydrase.